The following is a 68-amino-acid chain: Large ribosomal subunit protein uL30 (68 aa).

Belongs to the universal ribosomal protein uL30 family. In terms of assembly, part of the 50S ribosomal subunit.

The polypeptide is Large ribosomal subunit protein uL30 (Bartonella quintana (strain Toulouse) (Rochalimaea quintana)).